Reading from the N-terminus, the 347-residue chain is Quinolinate synthase (347 aa).

Positions 47 and 68 each coordinate iminosuccinate. A [4Fe-4S] cluster-binding site is contributed by cysteine 113. Residues 139–141 (YAN) and serine 156 each bind iminosuccinate. Cysteine 200 is a [4Fe-4S] cluster binding site. Residues 226–228 (HPE) and threonine 243 contribute to the iminosuccinate site. Residue cysteine 297 coordinates [4Fe-4S] cluster.

This sequence belongs to the quinolinate synthase family. Type 1 subfamily. [4Fe-4S] cluster is required as a cofactor.

The protein localises to the cytoplasm. It catalyses the reaction iminosuccinate + dihydroxyacetone phosphate = quinolinate + phosphate + 2 H2O + H(+). It participates in cofactor biosynthesis; NAD(+) biosynthesis; quinolinate from iminoaspartate: step 1/1. Its function is as follows. Catalyzes the condensation of iminoaspartate with dihydroxyacetone phosphate to form quinolinate. The protein is Quinolinate synthase of Salmonella paratyphi A (strain ATCC 9150 / SARB42).